We begin with the raw amino-acid sequence, 772 residues long: Protein transport protein SEC23 F (772 aa).

The Zn(2+) site is built by Cys-65, Cys-68, Cys-87, and Cys-90. The segment at Cys-65 to Cys-90 is zinc finger-like.

It belongs to the SEC23/SEC24 family. SEC23 subfamily. In terms of assembly, component of the coat protein complex II (COPII), composed of at least five proteins: the Sec23/24 complex, the Sec13/31 complex and Sar1. Interacts with SEC24A.

It localises to the cytoplasmic vesicle. The protein localises to the COPII-coated vesicle membrane. Its subcellular location is the endoplasmic reticulum membrane. The protein resides in the membrane. Its function is as follows. Component of the coat protein complex II (COPII) which promotes the formation of transport vesicles from the endoplasmic reticulum (ER). The coat has two main functions, the physical deformation of the endoplasmic reticulum membrane into vesicles and the selection of cargo molecules. This chain is Protein transport protein SEC23 F, found in Arabidopsis thaliana (Mouse-ear cress).